A 385-amino-acid chain; its full sequence is GTPase Obg (385 aa).

One can recognise an Obg domain in the interval 1-159 (MKFVDEVEIR…RNLKLELLLL (159 aa)). The OBG-type G domain occupies 160–333 (ADVGLLGLPN…LIHDVMTLLE (174 aa)). Residues 166 to 173 (GLPNAGKS), 191 to 195 (FTTLI), 213 to 216 (DIPG), 283 to 286 (NKID), and 314 to 316 (SAI) each bind GTP. S173 and T193 together coordinate Mg(2+).

Belongs to the TRAFAC class OBG-HflX-like GTPase superfamily. OBG GTPase family. Monomer. Mg(2+) is required as a cofactor.

It localises to the cytoplasm. In terms of biological role, an essential GTPase which binds GTP, GDP and possibly (p)ppGpp with moderate affinity, with high nucleotide exchange rates and a fairly low GTP hydrolysis rate. Plays a role in control of the cell cycle, stress response, ribosome biogenesis and in those bacteria that undergo differentiation, in morphogenesis control. This Pseudoalteromonas translucida (strain TAC 125) protein is GTPase Obg.